A 456-amino-acid polypeptide reads, in one-letter code: uncharacterized protein (456 aa).

Residues 3–61 (LMRKNETREFLIEDIEFPAVGVAFYNDKKVYIKGAVPGQKVLARVSKVRREKIEAKLKE) enclose the TRAM domain. Cys74, Cys80, Cys83, and Cys163 together coordinate [4Fe-4S] cluster. 4 residues coordinate S-adenosyl-L-methionine: Gln289, Tyr318, Glu339, and Asp384. Catalysis depends on Cys411, which acts as the Nucleophile.

This sequence belongs to the class I-like SAM-binding methyltransferase superfamily. RNA M5U methyltransferase family.

This is an uncharacterized protein from Clostridium acetobutylicum (strain ATCC 824 / DSM 792 / JCM 1419 / IAM 19013 / LMG 5710 / NBRC 13948 / NRRL B-527 / VKM B-1787 / 2291 / W).